Reading from the N-terminus, the 556-residue chain is Aplysianin-A (556 aa).

A signal peptide spans 1–19 (MAVRFLALGLLIFVTSCSG). 6 N-linked (GlcNAc...) asparagine glycosylation sites follow: Asn150, Asn177, Asn374, Asn399, Asn414, and Asn430.

The protein to A.fulica achacin protein. As to quaternary structure, homotetramer. As to expression, albumen gland.

Functionally, has antibacterial activity against Gram-negative and Gram-positive bacteria. The protein is Aplysianin-A of Aplysia kurodai (Kuroda's sea hare).